The chain runs to 120 residues: NAD(P)H-quinone oxidoreductase subunit 3, chloroplastic (120 aa).

3 helical membrane-spanning segments follow: residues 9–29, 64–84, and 88–108; these read IFWT…WISG, MFAL…PWAM, and VLGV…VVGL.

It belongs to the complex I subunit 3 family. As to quaternary structure, NDH is composed of at least 16 different subunits, 5 of which are encoded in the nucleus.

The protein resides in the plastid. It is found in the chloroplast thylakoid membrane. It catalyses the reaction a plastoquinone + NADH + (n+1) H(+)(in) = a plastoquinol + NAD(+) + n H(+)(out). It carries out the reaction a plastoquinone + NADPH + (n+1) H(+)(in) = a plastoquinol + NADP(+) + n H(+)(out). NDH shuttles electrons from NAD(P)H:plastoquinone, via FMN and iron-sulfur (Fe-S) centers, to quinones in the photosynthetic chain and possibly in a chloroplast respiratory chain. The immediate electron acceptor for the enzyme in this species is believed to be plastoquinone. Couples the redox reaction to proton translocation, and thus conserves the redox energy in a proton gradient. The sequence is that of NAD(P)H-quinone oxidoreductase subunit 3, chloroplastic from Agrostis stolonifera (Creeping bentgrass).